The sequence spans 252 residues: 1-(5-phosphoribosyl)-5-[(5-phosphoribosylamino)methylideneamino] imidazole-4-carboxamide isomerase (252 aa).

D10 serves as the catalytic Proton acceptor. Residue D129 is the Proton donor of the active site.

It belongs to the HisA/HisF family.

It is found in the cytoplasm. It catalyses the reaction 1-(5-phospho-beta-D-ribosyl)-5-[(5-phospho-beta-D-ribosylamino)methylideneamino]imidazole-4-carboxamide = 5-[(5-phospho-1-deoxy-D-ribulos-1-ylimino)methylamino]-1-(5-phospho-beta-D-ribosyl)imidazole-4-carboxamide. Its pathway is amino-acid biosynthesis; L-histidine biosynthesis; L-histidine from 5-phospho-alpha-D-ribose 1-diphosphate: step 4/9. The chain is 1-(5-phosphoribosyl)-5-[(5-phosphoribosylamino)methylideneamino] imidazole-4-carboxamide isomerase from Frankia casuarinae (strain DSM 45818 / CECT 9043 / HFP020203 / CcI3).